The chain runs to 240 residues: Probable septum site-determining protein MinC (240 aa).

It belongs to the MinC family. Interacts with MinD and FtsZ.

Functionally, cell division inhibitor that blocks the formation of polar Z ring septums. Rapidly oscillates between the poles of the cell to destabilize FtsZ filaments that have formed before they mature into polar Z rings. Prevents FtsZ polymerization. This chain is Probable septum site-determining protein MinC, found in Acinetobacter baylyi (strain ATCC 33305 / BD413 / ADP1).